A 906-amino-acid polypeptide reads, in one-letter code: Rho GTPase-activating protein gacJ (906 aa).

Residues Leu-53–Arg-117 are disordered. Residues Asn-69 to Asn-79 are compositionally biased toward low complexity. The span at Ser-92 to Arg-117 shows a compositional bias: basic and acidic residues. Positions Glu-161–Phe-348 constitute a Rho-GAP domain. Disordered stretches follow at residues Asp-368–Lys-415, Glu-452–Thr-864, and Ala-877–Lys-906. Polar residues predominate over residues Asn-381 to Ala-404. Over residues Thr-461 to Thr-487 the composition is skewed to low complexity. Composition is skewed to pro residues over residues Pro-494–Pro-510 and Gln-547–Pro-560. The span at Lys-565–Pro-574 shows a compositional bias: polar residues. Low complexity-rich tracts occupy residues Ser-575 to Lys-597 and Ile-613 to Thr-629. Positions Phe-637–Ser-649 are enriched in polar residues. 2 stretches are compositionally biased toward low complexity: residues Asn-650–Leu-663 and Ser-683–Lys-694. A compositionally biased stretch (pro residues) spans Pro-708 to Asn-721. Composition is skewed to low complexity over residues Pro-754–Pro-772, Pro-785–Lys-816, and Ser-844–Ser-861. Residues Ala-880–Gly-890 show a composition bias toward polar residues.

It is found in the cytoplasm. Rho GTPase-activating protein involved in the signal transduction pathway. The sequence is that of Rho GTPase-activating protein gacJ (gacJ) from Dictyostelium discoideum (Social amoeba).